The chain runs to 142 residues: Large ribosomal subunit protein bL17 (142 aa).

Belongs to the bacterial ribosomal protein bL17 family. As to quaternary structure, part of the 50S ribosomal subunit. Contacts protein L32.

In Chlamydia muridarum (strain MoPn / Nigg), this protein is Large ribosomal subunit protein bL17.